Here is a 240-residue protein sequence, read N- to C-terminus: Protein YIPF6 (240 aa).

The Cytoplasmic portion of the chain corresponds to 1-91; that stretch reads MVVSHLNRTV…PKKSSALLRD (91 aa). A helical transmembrane segment spans residues 92 to 112; sequence WDLWGPLLLCVTLALMLQGGS. Topologically, residues 113–125 are lumenal; it reads ADSEEDGRPQFAE. Residues 126–146 form a helical membrane-spanning segment; that stretch reads VFVIIWFGSVIITLNSKLLGG. Residues 147-149 are Cytoplasmic-facing; the sequence is TIS. A helical membrane pass occupies residues 150–170; it reads FFQSLCVLGYCILPLTVAMIV. The Lumenal portion of the chain corresponds to 171 to 172; the sequence is CR. A helical membrane pass occupies residues 173-193; the sequence is IVLLGGSGVVSFAVRLIVVTA. Residues 194 to 215 are Cytoplasmic-facing; the sequence is SFSWSTFASTAFLADSQPTNRK. Residues 216-236 traverse the membrane as a helical segment; that stretch reads ALVVYPVFLFYFVIGWMILTF. Topologically, residues 237–240 are lumenal; that stretch reads SPSH.

Belongs to the YIP1 family.

The protein localises to the golgi apparatus membrane. The sequence is that of Protein YIPF6 (yipf6) from Danio rerio (Zebrafish).